A 143-amino-acid chain; its full sequence is Transcriptional regulator MraZ (143 aa).

SpoVT-AbrB domains are found at residues glutamate 5–glutamate 47 and alanine 76–arginine 119.

It belongs to the MraZ family. As to quaternary structure, forms oligomers.

It is found in the cytoplasm. Its subcellular location is the nucleoid. This chain is Transcriptional regulator MraZ, found in Limosilactobacillus fermentum (strain NBRC 3956 / LMG 18251) (Lactobacillus fermentum).